The sequence spans 542 residues: Ribulokinase 2 (542 aa).

Belongs to the ribulokinase family.

It catalyses the reaction D-ribulose + ATP = D-ribulose 5-phosphate + ADP + H(+). The enzyme catalyses L-ribulose + ATP = L-ribulose 5-phosphate + ADP + H(+). Its pathway is carbohydrate degradation; L-arabinose degradation via L-ribulose; D-xylulose 5-phosphate from L-arabinose (bacterial route): step 2/3. This Staphylococcus saprophyticus subsp. saprophyticus (strain ATCC 15305 / DSM 20229 / NCIMB 8711 / NCTC 7292 / S-41) protein is Ribulokinase 2.